The sequence spans 199 residues: Peroxynitrite isomerase (199 aa).

The GXWXGXG motif lies at 20-26 (GVWEGTG). Residue His-190 coordinates heme b.

This sequence belongs to the nitrobindin family. In terms of assembly, homodimer. Heme b is required as a cofactor.

The enzyme catalyses peroxynitrite = nitrate. The protein operates within nitrogen metabolism. Its function is as follows. Heme-binding protein able to scavenge peroxynitrite and to protect free L-tyrosine against peroxynitrite-mediated nitration, by acting as a peroxynitrite isomerase that converts peroxynitrite to nitrate. Therefore, this protein likely plays a role in peroxynitrite sensing and in the detoxification of reactive nitrogen and oxygen species (RNS and ROS, respectively). Is able to bind nitric oxide (NO) in vitro, but may act as a sensor of peroxynitrite levels in vivo. The chain is Peroxynitrite isomerase from Clavibacter michiganensis subsp. michiganensis (strain NCPPB 382).